Consider the following 230-residue polypeptide: MKIAVIGAMEEEVELLRASLNNAQRTTIAGSEYTTGTYEGKEVVLLKSGIGKVNAAMSTTILLHEFKPDVVINTGSAGGYDEALEVGAVVISDEVRHHDVDVTIFGYEIGQMAGMPAAYKSDERLMKVAEEAVKAVGEHQYGIGLICSGDAFMNDPERVEAVRHHFPQMKAVEMEAAAVAQVCYQFATPFVVIRALSDIAGKESNISFDEFLPVAAKHSTQVVLKAIASL.

Catalysis depends on E12, which acts as the Proton acceptor. Substrate-binding positions include G78, M153, and M174–E175. Catalysis depends on D198, which acts as the Proton donor.

The protein belongs to the PNP/UDP phosphorylase family. MtnN subfamily.

It catalyses the reaction S-adenosyl-L-homocysteine + H2O = S-(5-deoxy-D-ribos-5-yl)-L-homocysteine + adenine. It carries out the reaction S-methyl-5'-thioadenosine + H2O = 5-(methylsulfanyl)-D-ribose + adenine. The enzyme catalyses 5'-deoxyadenosine + H2O = 5-deoxy-D-ribose + adenine. It participates in amino-acid biosynthesis; L-methionine biosynthesis via salvage pathway; S-methyl-5-thio-alpha-D-ribose 1-phosphate from S-methyl-5'-thioadenosine (hydrolase route): step 1/2. In terms of biological role, catalyzes the irreversible cleavage of the glycosidic bond in both 5'-methylthioadenosine (MTA) and S-adenosylhomocysteine (SAH/AdoHcy) to adenine and the corresponding thioribose, 5'-methylthioribose and S-ribosylhomocysteine, respectively. Also cleaves 5'-deoxyadenosine, a toxic by-product of radical S-adenosylmethionine (SAM) enzymes, into 5-deoxyribose and adenine. This chain is 5'-methylthioadenosine/S-adenosylhomocysteine nucleosidase, found in Lysinibacillus sphaericus (strain C3-41).